Reading from the N-terminus, the 311-residue chain is tRNA(Ile)-lysidine synthase (311 aa).

31-36 (SGGKDS) contributes to the ATP binding site.

This sequence belongs to the tRNA(Ile)-lysidine synthase family.

The protein localises to the cytoplasm. It catalyses the reaction cytidine(34) in tRNA(Ile2) + L-lysine + ATP = lysidine(34) in tRNA(Ile2) + AMP + diphosphate + H(+). Ligates lysine onto the cytidine present at position 34 of the AUA codon-specific tRNA(Ile) that contains the anticodon CAU, in an ATP-dependent manner. Cytidine is converted to lysidine, thus changing the amino acid specificity of the tRNA from methionine to isoleucine. The protein is tRNA(Ile)-lysidine synthase of Petrotoga mobilis (strain DSM 10674 / SJ95).